A 206-amino-acid chain; its full sequence is Large ribosomal subunit protein uL4 (206 aa).

Residues 48–78 (THSVKTRGHVSGGGAKPWRQKGTGRARAGSN) form a disordered region.

The protein belongs to the universal ribosomal protein uL4 family. In terms of assembly, part of the 50S ribosomal subunit.

One of the primary rRNA binding proteins, this protein initially binds near the 5'-end of the 23S rRNA. It is important during the early stages of 50S assembly. It makes multiple contacts with different domains of the 23S rRNA in the assembled 50S subunit and ribosome. Functionally, forms part of the polypeptide exit tunnel. This is Large ribosomal subunit protein uL4 from Lawsonia intracellularis (strain PHE/MN1-00).